The sequence spans 3135 residues: Gametocyte surface protein P230 (3135 aa).

An N-terminal signal peptide occupies residues 1-20 (MKKIITLKNLFLIILVYIFS). N76, N111, N135, and N239 each carry an N-linked (GlcNAc...) asparagine glycan. The interval 266–470 (EEDMSPRDNF…EEKDEGGESF (205 aa)) is disordered. 2 stretches are compositionally biased toward acidic residues: residues 276-321 (VIDD…EEQL) and 329-345 (VGAE…DEDS). Residues 346-358 (VEARDGDMIRVDE) are compositionally biased toward basic and acidic residues. Acidic residues-rich tracts occupy residues 376–444 (DVDE…EGEY) and 458–467 (GDEEEKDEGG). N585 carries N-linked (GlcNAc...) asparagine glycosylation. 6-Cys domains lie at 589–730 (KEYV…VEPY) and 733–887 (KING…INEE). Disulfide bonds link C593-C611, C626-C706, C737-C781, and C804-C862. 7 N-linked (GlcNAc...) asparagine glycosylation sites follow: N821, N829, N889, N961, N1079, N1089, and N1153. 4 6-Cys domains span residues 918 to 1133 (HDYT…ISKQ), 1136 to 1275 (KIKG…LKRE), 1285 to 1432 (KIYK…VSKR), and 1435 to 1560 (KVKG…YKKL). Cystine bridges form between C1140/C1161, C1175/C1251, and C1200/C1249. N-linked (GlcNAc...) asparagine glycosylation is found at N1267, N1300, N1452, N1492, N1508, N1621, and N1624. 3 disulfide bridges follow: C1439/C1459, C1473/C1534, and C1483/C1532. 6-Cys domains follow at residues 1694-1907 (NRHV…ISNS), 1910-2035 (KING…LNKD), 2052-2199 (NVHL…VRKN), and 2204-2374 (SFKL…SDNR). Intrachain disulfides connect C1698-C1726 and C1740-C1881. Residues N1753, N1804, N1882, N1920, N1954, and N1972 are each glycosylated (N-linked (GlcNAc...) asparagine). 4 cysteine pairs are disulfide-bonded: C1914–C1938, C1952–C2017, C1963–C2015, and C2056–C2074. N2178 and N2199 each carry an N-linked (GlcNAc...) asparagine glycan. Disulfide bonds link C2208-C2229, C2243-C2356, and C2254-C2354. Residues N2312 and N2351 are each glycosylated (N-linked (GlcNAc...) asparagine). Residues 2410–2432 (IKQQQEEEQQEQILKDQDDRLSR) form a disordered region. Residues 2422 to 2432 (ILKDQDDRLSR) are compositionally biased toward basic and acidic residues. Residues N2439, N2457, N2466, N2504, N2586, N2611, N2650, N2677, and N2688 are each glycosylated (N-linked (GlcNAc...) asparagine). 6-Cys domains are found at residues 2448–2663 (NEHI…ISSN), 2666–2827 (IIHG…IDEK), 2831–2979 (GKDI…INQG), and 2982–3113 (EIHG…PEPQ). 2 disulfides stabilise this stretch: C2452-C2476 and C2490-C2638. 3 cysteine pairs are disulfide-bonded: C2670-C2706, C2720-C2804, and C2730-C2802. An N-linked (GlcNAc...) asparagine glycan is attached at N2952. C2986 and C3010 form a disulfide bridge. N-linked (GlcNAc...) asparagine glycosylation is found at N3011, N3016, N3066, N3093, and N3096. 2 disulfide bridges follow: C3024/C3090 and C3035/C3088.

In terms of assembly, heterodimer; heterodimerizes with PF45/48. Post-translationally, may be processed into a 310 kDa form as the parasite emerges from the host erythrocytes.

It localises to the cell surface. It is found in the cell membrane. Functionally, gametocyte surface protein required for male/female gamete fusion. Also required for male gamete exflagellation and interaction with host erythrocytes. This Plasmodium falciparum (isolate 3D7) protein is Gametocyte surface protein P230 (PFS230).